The chain runs to 390 residues: Lipid-A-disaccharide synthase (390 aa).

The protein belongs to the LpxB family.

It carries out the reaction a lipid X + a UDP-2-N,3-O-bis[(3R)-3-hydroxyacyl]-alpha-D-glucosamine = a lipid A disaccharide + UDP + H(+). Its pathway is bacterial outer membrane biogenesis; LPS lipid A biosynthesis. Condensation of UDP-2,3-diacylglucosamine and 2,3-diacylglucosamine-1-phosphate to form lipid A disaccharide, a precursor of lipid A, a phosphorylated glycolipid that anchors the lipopolysaccharide to the outer membrane of the cell. The protein is Lipid-A-disaccharide synthase of Neisseria gonorrhoeae (strain ATCC 700825 / FA 1090).